The primary structure comprises 340 residues: UDP-3-O-(3-hydroxymyristoyl)glucosamine N-acyltransferase (340 aa).

The active-site Proton acceptor is His239.

The protein belongs to the transferase hexapeptide repeat family. LpxD subfamily. In terms of assembly, homotrimer.

The catalysed reaction is a UDP-3-O-[(3R)-3-hydroxyacyl]-alpha-D-glucosamine + a (3R)-hydroxyacyl-[ACP] = a UDP-2-N,3-O-bis[(3R)-3-hydroxyacyl]-alpha-D-glucosamine + holo-[ACP] + H(+). It catalyses the reaction UDP-3-O-[(3R)-3-hydroxytetradecanoyl]-alpha-D-glucosamine + (3R)-hydroxytetradecanoyl-[ACP] = UDP-2-N,3-O-bis[(3R)-3-hydroxytetradecanoyl]-alpha-D-glucosamine + holo-[ACP] + H(+). Its pathway is glycolipid biosynthesis; lipid IV(A) biosynthesis; lipid IV(A) from (3R)-3-hydroxytetradecanoyl-[acyl-carrier-protein] and UDP-N-acetyl-alpha-D-glucosamine: step 3/6. Catalyzes the N-acylation of UDP-3-O-(hydroxytetradecanoyl)glucosamine using 3-hydroxytetradecanoyl-ACP as the acyl donor. Is involved in the biosynthesis of lipid A, a phosphorylated glycolipid that anchors the lipopolysaccharide to the outer membrane of the cell. This Wigglesworthia glossinidia brevipalpis protein is UDP-3-O-(3-hydroxymyristoyl)glucosamine N-acyltransferase.